The chain runs to 146 residues: Hemoglobin subunit beta (146 aa).

The residue at position 1 (V1) is an N-acetylvaline. The Globin domain maps to 2–146 (HLSDGEKNAI…VANALAHKYH (145 aa)). At S44 the chain carries Phosphoserine. The residue at position 59 (K59) is an N6-acetyllysine. Heme b is bound at residue H63. K82 carries the N6-acetyllysine modification. H92 contacts heme b. C93 bears the S-nitrosocysteine mark. Residue K144 is modified to N6-acetyllysine.

This sequence belongs to the globin family. Heterotetramer of two alpha chains and two beta chains. Red blood cells.

Its function is as follows. Involved in oxygen transport from the lung to the various peripheral tissues. This chain is Hemoglobin subunit beta (HBB), found in Spermophilus citellus (European ground squirrel).